Consider the following 81-residue polypeptide: Large ribosomal subunit protein bL31B (81 aa).

The protein belongs to the bacterial ribosomal protein bL31 family. Type B subfamily. Part of the 50S ribosomal subunit.

This chain is Large ribosomal subunit protein bL31B, found in Listeria innocua serovar 6a (strain ATCC BAA-680 / CLIP 11262).